Here is a 381-residue protein sequence, read N- to C-terminus: Deoxyguanosinetriphosphate triphosphohydrolase-like protein (381 aa).

An HD domain is found at 76-203 (RMTHTLEVAG…ADLSDEIAYT (128 aa)).

It belongs to the dGTPase family. Type 2 subfamily.

This is Deoxyguanosinetriphosphate triphosphohydrolase-like protein from Leptospira interrogans serogroup Icterohaemorrhagiae serovar copenhageni (strain Fiocruz L1-130).